Here is a 151-residue protein sequence, read N- to C-terminus: MTVLYIDADACPVKDEVYKVAARYGLKTFVVSNSWIRVPLTPAIEQIVVDAGPDIADDWIAERAGPGDVVITNDIPLADRVLKAGGAALGTTGRLFTVDTIGSALASRMIGEHLRSMGEITSGPKAFGPADRSKFLQALDTAVVKARRVVR.

Belongs to the UPF0178 family.

This is UPF0178 protein Caul_3070 from Caulobacter sp. (strain K31).